A 539-amino-acid polypeptide reads, in one-letter code: Glycine betaine transporter 2 (539 aa).

The next 12 membrane-spanning stretches (helical) occupy residues 44-64, 85-105, 129-149, 175-195, 231-251, 265-285, 299-319, 348-368, 380-400, 426-446, 480-500, and 503-523; these read LTNPVFWLSGSFLSLFVLLAL, FGAYWQVLLLLNFLIGLALAF, IVLCTLLAGGGVFWAAAEPIA, FMHWGFLAWAILGCLSSIVLM, CSIIAVAAGTIGPIGFLGLQI, FITQSMVIVAAIVMYTLSALS, IILSVLLIGYILFFGPTSFII, WWTVFFWGWFIGYGPMMAIFI, LILSISIAAPLITCFWFSIVG, VLLAITGELPFPMIISVLFLI, FWGLMMGVVAIALISMGSGGI, and LQSFIVITAVPVSFILLPSIL.

It belongs to the BCCT transporter (TC 2.A.15) family.

Its subcellular location is the cell inner membrane. Functionally, involved in the uptake of the osmoprotectant glycine betaine. This Vibrio parahaemolyticus serotype O3:K6 (strain RIMD 2210633) protein is Glycine betaine transporter 2.